We begin with the raw amino-acid sequence, 349 residues long: MDAMKPLLGKLATGASLTQAEATRAFDLIFEGAATPAQLGAFLMALRVRGETIDEIVGAVAAMRARMLRVDAPADAMDIVGTGGDGHSTYNVSTLAALIVSACGVPVAKHGNRAASSQSGASDVLSALGVKIGLDSREVEACLEAAGVAFMSAQAHHAAMRHVAAARAELGTRTIFNILGPLANPAGVKFQLLGVYAKSWLEPLAQALRALGSTRVWLVHGADGLDEATTTGPTHVVALENGAIRAFDITPEDAGLQRAALADLKGGSPAFNAAALKAVLEGRKSPYRDIAILNAAAALIVAGRAADLREGARLAAAAIDDGRAASTLSKLVEASNRASLPAVAAGSCP.

Residues Gly-81, 84 to 85 (GD), Thr-89, 91 to 94 (NVST), 109 to 117 (KHGNRAASS), and Ala-121 contribute to the 5-phospho-alpha-D-ribose 1-diphosphate site. An anthranilate-binding site is contributed by Gly-81. Position 93 (Ser-93) interacts with Mg(2+). Asn-112 contacts anthranilate. Arg-167 provides a ligand contact to anthranilate. Mg(2+)-binding residues include Asp-226 and Glu-227.

Belongs to the anthranilate phosphoribosyltransferase family. Homodimer. Requires Mg(2+) as cofactor.

It carries out the reaction N-(5-phospho-beta-D-ribosyl)anthranilate + diphosphate = 5-phospho-alpha-D-ribose 1-diphosphate + anthranilate. It participates in amino-acid biosynthesis; L-tryptophan biosynthesis; L-tryptophan from chorismate: step 2/5. In terms of biological role, catalyzes the transfer of the phosphoribosyl group of 5-phosphorylribose-1-pyrophosphate (PRPP) to anthranilate to yield N-(5'-phosphoribosyl)-anthranilate (PRA). This Methylocella silvestris (strain DSM 15510 / CIP 108128 / LMG 27833 / NCIMB 13906 / BL2) protein is Anthranilate phosphoribosyltransferase.